An 896-amino-acid chain; its full sequence is FHIP family protein C05D11.8 (896 aa).

The segment at 823–865 (STASSPRTSDDHDPTLFYGRSTMAPPGRKPLLREPSRQETLDD) is disordered. The segment covering 853 to 865 (LLREPSRQETLDD) has biased composition (basic and acidic residues).

The protein belongs to the FHIP family.

This Caenorhabditis elegans protein is FHIP family protein C05D11.8.